The primary structure comprises 338 residues: Glycerol-3-phosphate dehydrogenase [NAD(P)+] (338 aa).

NADPH is bound by residues serine 14, tyrosine 15, histidine 35, and lysine 109. Sn-glycerol 3-phosphate-binding residues include lysine 109, glycine 138, and threonine 140. Residue alanine 142 participates in NADPH binding. Residues lysine 194, aspartate 247, serine 257, arginine 258, and asparagine 259 each coordinate sn-glycerol 3-phosphate. Residue lysine 194 is the Proton acceptor of the active site. An NADPH-binding site is contributed by arginine 258. Residues valine 282 and glutamate 284 each coordinate NADPH.

Belongs to the NAD-dependent glycerol-3-phosphate dehydrogenase family.

The protein localises to the cytoplasm. It carries out the reaction sn-glycerol 3-phosphate + NAD(+) = dihydroxyacetone phosphate + NADH + H(+). The enzyme catalyses sn-glycerol 3-phosphate + NADP(+) = dihydroxyacetone phosphate + NADPH + H(+). It functions in the pathway membrane lipid metabolism; glycerophospholipid metabolism. Catalyzes the reduction of the glycolytic intermediate dihydroxyacetone phosphate (DHAP) to sn-glycerol 3-phosphate (G3P), the key precursor for phospholipid synthesis. The protein is Glycerol-3-phosphate dehydrogenase [NAD(P)+] of Shewanella sediminis (strain HAW-EB3).